The chain runs to 457 residues: MLRLQNLPKLVRRFATTALPKTETTTLKNGLTVATEHHPYAQTATVLVGVDAGSRAETAKNNGAAHFLEHLAFKGTKNRSQKALELEFENTGAHLNAYTSREQTVYYAHAFKNAVPNAVAVLADILTNSSISASAVERERQVILREQEEVDKMADEVVFDHLHATAYQGHPLGRTILGPKENIESLTREDLLQYIKDNYRSDRMIISSAGSISHEELVKLAEKYFGHLEPSAEQLSLGAPRGLKPRFVGSEIRARDDDSPTANIAIAVEGMSWKHPDYFTALVMQAIIGNWDRAMGASPHLSSRLSTIVQQHQLANSFMSFSTSYSDTGLWGIYLVTENLGRIDDLVHFTLQNWARLTVATRAEVERAKAQLRASLLLSLDSTTAIAEDIGRQLLTTGRRMSPQEVDLRIGQITEKDVARVASEMIWDKDIAVSAVGSIEGLLDYNRIRSSISMNRW.

His-66 contacts Zn(2+). Glu-69 (proton acceptor) is an active-site residue. Residues His-70 and Glu-146 each contribute to the Zn(2+) site.

The protein belongs to the peptidase M16 family. As to quaternary structure, heterodimer of mas2 (alpha) and qcr1 (beta) subunits, forming the mitochondrial processing protease (MPP) in which mas2 is involved in substrate recognition and binding and qcr1 is the catalytic subunit. The cofactor is Zn(2+).

The protein localises to the mitochondrion matrix. It catalyses the reaction Release of N-terminal transit peptides from precursor proteins imported into the mitochondrion, typically with Arg in position P2.. With respect to regulation, binding to mas2 is required for catalytic activity. Functionally, catalytic subunit of the essential mitochondrial processing protease (MPP), which cleaves the mitochondrial sequence off newly imported precursors proteins. Preferentially, cleaves after an arginine at position P2. This Schizosaccharomyces pombe (strain 972 / ATCC 24843) (Fission yeast) protein is Probable mitochondrial-processing peptidase subunit beta (qcr1).